The primary structure comprises 162 residues: Regulator of sigma D (162 aa).

This sequence belongs to the Rsd/AlgQ family. As to quaternary structure, interacts with RpoD.

The protein localises to the cytoplasm. Its function is as follows. Binds RpoD and negatively regulates RpoD-mediated transcription activation by preventing the interaction between the primary sigma factor RpoD with the catalytic core of the RNA polymerase and with promoter DNA. May be involved in replacement of the RNA polymerase sigma subunit from RpoD to RpoS during the transition from exponential growth to the stationary phase. The sequence is that of Regulator of sigma D from Salmonella choleraesuis (strain SC-B67).